A 137-amino-acid chain; its full sequence is MNTLGLYQSDWSKAPPHAHAYHVKTTREQGHYHLIEGFTQPANGSNTDQHTHYYTGITSFENGHFHRYYGISGPAIPLADGTHYHEIEETTYLAYNEPIEIQYGGVVYDPGDDRRKTHRHTLKGKTREIVGNEPLGW.

This is an uncharacterized protein from Bacillus subtilis (strain 168).